The primary structure comprises 206 residues: Large ribosomal subunit protein bL25 (206 aa).

Belongs to the bacterial ribosomal protein bL25 family. CTC subfamily. As to quaternary structure, part of the 50S ribosomal subunit; part of the 5S rRNA/L5/L18/L25 subcomplex. Contacts the 5S rRNA. Binds to the 5S rRNA independently of L5 and L18.

In terms of biological role, this is one of the proteins that binds to the 5S RNA in the ribosome where it forms part of the central protuberance. The protein is Large ribosomal subunit protein bL25 of Ralstonia nicotianae (strain ATCC BAA-1114 / GMI1000) (Ralstonia solanacearum).